The sequence spans 149 residues: Transcription antitermination protein NusB (149 aa).

It belongs to the NusB family.

Its function is as follows. Involved in transcription antitermination. Required for transcription of ribosomal RNA (rRNA) genes. Binds specifically to the boxA antiterminator sequence of the ribosomal RNA (rrn) operons. The protein is Transcription antitermination protein NusB of Caulobacter vibrioides (strain ATCC 19089 / CIP 103742 / CB 15) (Caulobacter crescentus).